A 193-amino-acid polypeptide reads, in one-letter code: Ion-translocating oxidoreductase complex subunit A (193 aa).

Helical transmembrane passes span 5-25 (LLILVSTILVNNFVLVQFLGL), 38-58 (AMGMSLATTFVLTLSSLCSYL), 65-85 (APLGMEFLKTITFILVIAVVV), 102-122 (VLGIFLPLITTNCAVLGVALL), 134-154 (ILYGFGAAVGFSLVLTLFSAM), and 171-191 (AIGMITAGLMSLAFLGFTGLV).

It belongs to the NqrDE/RnfAE family. As to quaternary structure, the complex is composed of six subunits: RnfA, RnfB, RnfC, RnfD, RnfE and RnfG.

It localises to the cell inner membrane. Functionally, part of a membrane-bound complex that couples electron transfer with translocation of ions across the membrane. The sequence is that of Ion-translocating oxidoreductase complex subunit A from Hahella chejuensis (strain KCTC 2396).